Here is a 214-residue protein sequence, read N- to C-terminus: Probable transaldolase (214 aa).

Lys83 (schiff-base intermediate with substrate) is an active-site residue.

This sequence belongs to the transaldolase family. Type 3B subfamily.

The protein resides in the cytoplasm. The catalysed reaction is D-sedoheptulose 7-phosphate + D-glyceraldehyde 3-phosphate = D-erythrose 4-phosphate + beta-D-fructose 6-phosphate. It participates in carbohydrate degradation; pentose phosphate pathway; D-glyceraldehyde 3-phosphate and beta-D-fructose 6-phosphate from D-ribose 5-phosphate and D-xylulose 5-phosphate (non-oxidative stage): step 2/3. In terms of biological role, transaldolase is important for the balance of metabolites in the pentose-phosphate pathway. The chain is Probable transaldolase from Clostridium botulinum (strain Alaska E43 / Type E3).